The sequence spans 471 residues: MKIKTRFAPSPTGYLHVGGARTALYSWLFARNHGGEFVLRIEDTDLERSTPEAIEAIMDGMNWLSLEWDEGPYYQTKRFDRYNAVIDQMLEEGTAYKCYCSKERLEALREEQMAKGEKPRYDGRCRHSHEHHADDEPCVVRFANPQEGSVVFDDQIRGPIEFSNQELDDLIIRRTDGSPTYNFCVVVDDWDMEITHVIRGEDHINNTPRQINILKALKAPVPVYAHVSMINGDDGKKLSKRHGAVSVMQYRDDGYLPEALLNYLVRLGWSHGDQEIFTREEMIKYFTLNAVSKSASAFNTDKLLWLNHHYINALPPEYVATHLQWHIEQENIDTRNGPQLADLVKLLGERCKTLKEMAQSCRYFYEDFAEFDADARKKHLRPVARQPLEVVRDKLAAITDWPAENVHHAIQATADELEVGMGKVGMPLRVAVTGAGQSPALDVTVHAIGKTRSIERINKALDFIAERENQQ.

A 'HIGH' region motif is present at residues 9–19; that stretch reads PSPTGYLHVGG. Residues Cys98, Cys100, Cys125, and His127 each coordinate Zn(2+). Residues 237-241 carry the 'KMSKS' region motif; the sequence is KLSKR. Position 240 (Lys240) interacts with ATP.

This sequence belongs to the class-I aminoacyl-tRNA synthetase family. Glutamate--tRNA ligase type 1 subfamily. As to quaternary structure, monomer. Zn(2+) serves as cofactor.

It localises to the cytoplasm. The enzyme catalyses tRNA(Glu) + L-glutamate + ATP = L-glutamyl-tRNA(Glu) + AMP + diphosphate. In terms of biological role, catalyzes the attachment of glutamate to tRNA(Glu) in a two-step reaction: glutamate is first activated by ATP to form Glu-AMP and then transferred to the acceptor end of tRNA(Glu). This Shigella flexneri protein is Glutamate--tRNA ligase.